Consider the following 1104-residue polypeptide: Lon protease homolog, mitochondrial (1104 aa).

The N-terminal 54 residues, 1–54 (MLRGQTLRWRAALQTPRSLILRPLFAPGGYNVGPRSVLETSRRFRSLPPSLRTF), are a transit peptide targeting the mitochondrion. Disordered stretches follow at residues 41–192 (SRRF…KPSV) and 296–317 (SLIPPGDSTKSGNSEDKTTEKR). Composition is skewed to basic and acidic residues over residues 64-104 (KPPP…DSSG) and 125-144 (KAADRDQRSVTEDAKREAEA). Low complexity predominate over residues 158–169 (SDSSSESKPSGS). 2 stretches are compositionally biased toward basic and acidic residues: residues 172–187 (GGDDGGKKGKKNDKAL) and 308–317 (NSEDKTTEKR). In terms of domain architecture, Lon N-terminal spans 199-451 (VMAIPIAKRP…KGLVVLKKEL (253 aa)). ATP is bound at residue 604-611 (GPPGVGKT). Residues 825–839 (AEGKAAQEESEKETG) show a composition bias toward basic and acidic residues. A disordered region spans residues 825–857 (AEGKAAQEESEKETGPIESTSEQEKATTENPRV). The Lon proteolytic domain maps to 891 to 1077 (TFPPGVTMGL…SEVFDILFAD (187 aa)). Active-site residues include Ser983 and Lys1026.

It belongs to the peptidase S16 family. As to quaternary structure, homohexamer or homoheptamer. Organized in a ring with a central cavity.

Its subcellular location is the mitochondrion matrix. It carries out the reaction Hydrolysis of proteins in presence of ATP.. ATP-dependent serine protease that mediates the selective degradation of misfolded, unassembled or oxidatively damaged polypeptides as well as certain short-lived regulatory proteins in the mitochondrial matrix. May also have a chaperone function in the assembly of inner membrane protein complexes. Participates in the regulation of mitochondrial gene expression and in the maintenance of the integrity of the mitochondrial genome. Binds to mitochondrial DNA in a site-specific manner. The polypeptide is Lon protease homolog, mitochondrial (pim1) (Emericella nidulans (strain FGSC A4 / ATCC 38163 / CBS 112.46 / NRRL 194 / M139) (Aspergillus nidulans)).